Reading from the N-terminus, the 698-residue chain is G1/S-specific cyclin CCN1 (698 aa).

Residues 1–11 show a composition bias toward low complexity; the sequence is MTSLQQQQQQQ. Disordered stretches follow at residues 1–21, 277–326, 469–577, 599–619, and 659–698; these read MTSLQQQQQQQRVKYGPPHHI, QKKQ…DDED, DEDE…GSIL, SNSSNINIHHGHHNTKQEKRY, and NNTNSSSPLMNQQQQYYHQQQHQQQVTQSSLYQHHHQYHQ. Positions 277–302 are enriched in polar residues; that stretch reads QKKQKKAFSSNSSRTTTASYTHQNQS. Composition is skewed to acidic residues over residues 310 to 326 and 469 to 480; these read DEDIDLDSGDEGDDDED and DEDENVSTDDEA. 2 stretches are compositionally biased toward polar residues: residues 493 to 520 and 528 to 567; these read DGNNQLFTPKSPNAFSSNSSLTLNNHPQ and PSATSQYSLFSNKNNRTHESTSGLNSTCNTPTHISISSFA. Residues 659–669 show a composition bias toward polar residues; that stretch reads NNTNSSSPLMN. A compositionally biased stretch (low complexity) spans 670–690; that stretch reads QQQQYYHQQQHQQQVTQSSLY.

The protein belongs to the cyclin family.

Its function is as follows. Essential for the control of the cell cycle at the G1/S (start) transition. Interacts with the CDC2 protein kinase to form MPF. The chain is G1/S-specific cyclin CCN1 (CCN1) from Candida albicans (strain WO-1) (Yeast).